We begin with the raw amino-acid sequence, 224 residues long: ATP-dependent dethiobiotin synthetase BioD (224 aa).

14 to 19 (GIGKTV) contacts ATP. Thr18 lines the Mg(2+) pocket. Lys39 is an active-site residue. A substrate-binding site is contributed by Ser43. ATP contacts are provided by residues Asp56, 117–120 (EGVG), and 177–178 (NE). 2 residues coordinate Mg(2+): Asp56 and Glu117.

Belongs to the dethiobiotin synthetase family. In terms of assembly, homodimer. The cofactor is Mg(2+).

The protein resides in the cytoplasm. The catalysed reaction is (7R,8S)-7,8-diammoniononanoate + CO2 + ATP = (4R,5S)-dethiobiotin + ADP + phosphate + 3 H(+). Its pathway is cofactor biosynthesis; biotin biosynthesis; biotin from 7,8-diaminononanoate: step 1/2. In terms of biological role, catalyzes a mechanistically unusual reaction, the ATP-dependent insertion of CO2 between the N7 and N8 nitrogen atoms of 7,8-diaminopelargonic acid (DAPA, also called 7,8-diammoniononanoate) to form a ureido ring. The protein is ATP-dependent dethiobiotin synthetase BioD of Xanthomonas campestris pv. campestris (strain B100).